The chain runs to 800 residues: Cation/H(+) antiporter 9 (800 aa).

Transmembrane regions (helical) follow at residues 43–63, 73–93, 110–130, 145–165, 186–206, 216–236, 247–267, 287–306, 338–358, 371–391, 401–421, and 430–450; these read VIFGYALPLLELQIILIFVCI, IGIPRFVSNILAGLILGPQLL, NVALEGVARLGLVMFTFLMGV, IVIAVSSFFVTMISGLAFRNF, VIVSIQAVTLLPVITHLVYEL, IAISTAAVSDFLGFLTLVCIS, GIANRDIVALIILVLVILFIF, VYLYVTILTAIAASIYLSVF, LVTNIFFPISIAVMAMKADVV, ILLLGLTVVVKWTASFVPCLI, VIIATIMNYKGFVDLCFFDVA, and ATYTVMIIYVLLNAGILPTII.

It belongs to the monovalent cation:proton antiporter 2 (CPA2) transporter (TC 2.A.37) family. CHX (TC 2.A.37.4) subfamily.

It localises to the membrane. Functionally, may operate as a cation/H(+) antiporter. This Arabidopsis thaliana (Mouse-ear cress) protein is Cation/H(+) antiporter 9 (CHX9).